The primary structure comprises 254 residues: 4-hydroxy-tetrahydrodipicolinate reductase (254 aa).

NAD(+) contacts are provided by residues 8–13 (GASGKM), 87–89 (GTT), and 111–114 (ATNM). H143 functions as the Proton donor/acceptor in the catalytic mechanism. Residue H144 coordinates (S)-2,3,4,5-tetrahydrodipicolinate. The Proton donor role is filled by K147. Position 153 to 154 (153 to 154 (GT)) interacts with (S)-2,3,4,5-tetrahydrodipicolinate.

It belongs to the DapB family.

It is found in the cytoplasm. The catalysed reaction is (S)-2,3,4,5-tetrahydrodipicolinate + NAD(+) + H2O = (2S,4S)-4-hydroxy-2,3,4,5-tetrahydrodipicolinate + NADH + H(+). It carries out the reaction (S)-2,3,4,5-tetrahydrodipicolinate + NADP(+) + H2O = (2S,4S)-4-hydroxy-2,3,4,5-tetrahydrodipicolinate + NADPH + H(+). It functions in the pathway amino-acid biosynthesis; L-lysine biosynthesis via DAP pathway; (S)-tetrahydrodipicolinate from L-aspartate: step 4/4. Functionally, catalyzes the conversion of 4-hydroxy-tetrahydrodipicolinate (HTPA) to tetrahydrodipicolinate. In Campylobacter curvus (strain 525.92), this protein is 4-hydroxy-tetrahydrodipicolinate reductase.